Reading from the N-terminus, the 485-residue chain is Glutamyl-tRNA(Gln) amidotransferase subunit A (485 aa).

Residues Lys79 and Ser154 each act as charge relay system in the active site. Ser178 serves as the catalytic Acyl-ester intermediate.

Belongs to the amidase family. GatA subfamily. In terms of assembly, heterotrimer of A, B and C subunits.

It carries out the reaction L-glutamyl-tRNA(Gln) + L-glutamine + ATP + H2O = L-glutaminyl-tRNA(Gln) + L-glutamate + ADP + phosphate + H(+). Its function is as follows. Allows the formation of correctly charged Gln-tRNA(Gln) through the transamidation of misacylated Glu-tRNA(Gln) in organisms which lack glutaminyl-tRNA synthetase. The reaction takes place in the presence of glutamine and ATP through an activated gamma-phospho-Glu-tRNA(Gln). The sequence is that of Glutamyl-tRNA(Gln) amidotransferase subunit A from Clostridium botulinum (strain Kyoto / Type A2).